The sequence spans 1097 residues: MAGASVKVAVRVRPFNARETSQDAKCVVSMQGNTTSIINPKQSRMFLKASFDYSYWSHTSVEDPQFASQQQVYRDIGEEMLLHAFEGYNVCIFAYGQTGAGKSYTMMGRQEPGQQGIVPQLCEDLFSRVNVNQSAQLSYSVEVSYMEIYCERVRDLLNPKSRGSLRVREHPILGPYVQDLSKLAVTSYADIADLMDCGNKARTVAATNMNETSSRSHAVFTIVFTQRSHDQLTGLDSEKVSKISLVNLAGSERADSSGARGMRLKEGANINKSLTTLGKVISALADLQSKKRKSDFIPYRDSVLTWLLKENLGGNSRTAMIAALSPADINYEETLSTLRYADRTKQIRCNAVINEDPNARLIRELQEEVARLRELLMAQGLSASALGGLKVEEGSPGGVLPAASSPPAPASPSSPPPHNGELEPSFSPSAEPQIGPEEAMERLQETEKIIAELNETWEEKLRKTEALRMEREALLAEMGSPGGWRTVGVFSPKKTPHLVNLNEDPLMSECLLYHIKDGVTRVGQVDVDIKLTGQFIREQHCLFRSIPQPDGEVMVTLEPCEGAETYVNGKLVTEPLVLKSGNRIVMGKNHVFRFNHPEQARLERERGVPPPPGPPSEPVDWNFAQKDWLEQQGIDIKLEMEKRLQDLENQYRKEKEEADLLLEQQRLYADSDSGEDSDKRSCEESWRLISSLRDELPPNTVQTIVKRCGLPSSGKRRAPRRVYQIPQRRRLQGKDPRWATMADLKMQAVKEICYEVALADFRHGRAEIEALAALKMRELCRTYGKPEGPGDAWRAVARDVWDTVGEEEGCGGGGGGGEEGARGAEVEDLRAHIDKLTGILQEVKLQNSSKDRELQALRDRMLRMERVIPLTQDLEDDNEESGLVTWAPPEGSEAVEEAVSNDHSPAVRPSSPPQSSWERVSRLMEEDPAFRRGRLRWLKQEQLRLQGLQGSGGRGGGLRRPPARFVPPHDCKLRFPFKSNPQHRESWPGMGSGEAPGPQPPEEVTAPPPPPNRRPPSPRRPHRPRRNSLDGGSRSRGGGSTQPEPQHLRPQKHNSYPQQPQPYPAQRPGPRYPPYTTPPRMRRQRSAPDLKESGAAV.

One can recognise a Kinesin motor domain in the interval serine 5–isoleucine 347. Residue glycine 96–serine 103 coordinates ATP. Serine 294 carries the phosphoserine modification. A coiled-coil region spans residues asparagine 358 to glycine 380. The disordered stretch occupies residues glycine 397–isoleucine 434. Over residues serine 404–histidine 418 the composition is skewed to pro residues. Residues glutamate 437–methionine 478 adopt a coiled-coil conformation. Residue serine 491 is modified to Phosphoserine. The FHA domain maps to threonine 520–glycine 587. Residues glutamate 630–serine 671 are a coiled coil. Serine 671 and serine 673 each carry phosphoserine. Residues alanine 824 to isoleucine 868 adopt a coiled-coil conformation. Disordered regions lie at residues glutamate 897–serine 921 and glutamine 946–valine 1097. Position 911 is a phosphoserine (serine 911). Residues glutamine 949–leucine 958 are compositionally biased toward gly residues. Pro residues predominate over residues glycine 997–proline 1015. The segment covering proline 1016–arginine 1026 has biased composition (basic residues). A Phosphoserine modification is found at serine 1028. The residue at position 1036 (arginine 1036) is an Omega-N-methylarginine. The span at glutamine 1059–threonine 1077 shows a compositional bias: pro residues. Threonine 1077 bears the Phosphothreonine mark. Serine 1086 carries the post-translational modification Phosphoserine. Over residues serine 1086 to valine 1097 the composition is skewed to basic and acidic residues.

This sequence belongs to the TRAFAC class myosin-kinesin ATPase superfamily. Kinesin family. Unc-104 subfamily.

The protein localises to the cytoplasm. It localises to the cytoskeleton. Its function is as follows. Probable motor protein. The sequence is that of Kinesin-like protein KIF1C (Kif1c) from Rattus norvegicus (Rat).